A 256-amino-acid chain; its full sequence is Acetyl-coenzyme A carboxylase carboxyl transferase subunit alpha (256 aa).

One can recognise a CoA carboxyltransferase C-terminal domain in the interval 1–236 (MSDVARILKE…KTAIVDELAE (236 aa)).

It belongs to the AccA family. As to quaternary structure, acetyl-CoA carboxylase is a heterohexamer composed of biotin carboxyl carrier protein (AccB), biotin carboxylase (AccC) and two subunits each of ACCase subunit alpha (AccA) and ACCase subunit beta (AccD).

The protein resides in the cytoplasm. The enzyme catalyses N(6)-carboxybiotinyl-L-lysyl-[protein] + acetyl-CoA = N(6)-biotinyl-L-lysyl-[protein] + malonyl-CoA. Its pathway is lipid metabolism; malonyl-CoA biosynthesis; malonyl-CoA from acetyl-CoA: step 1/1. Functionally, component of the acetyl coenzyme A carboxylase (ACC) complex. First, biotin carboxylase catalyzes the carboxylation of biotin on its carrier protein (BCCP) and then the CO(2) group is transferred by the carboxyltransferase to acetyl-CoA to form malonyl-CoA. The sequence is that of Acetyl-coenzyme A carboxylase carboxyl transferase subunit alpha from Streptococcus thermophilus (strain ATCC BAA-250 / LMG 18311).